The primary structure comprises 333 residues: SPbeta prophage-derived recombinase-like protein YomM (333 aa).

Positions 30 to 113 (EEHRNLVQEF…GVSSLNNYIE (84 aa)) constitute a Core-binding (CB) domain. In terms of domain architecture, Tyr recombinase spans 142–332 (YEKVKVTYDD…DFEEEKNQIF (191 aa)). Residues Arg180, Lys211, His281, and His308 contribute to the active site. Residue Tyr319 is the O-(3'-phospho-DNA)-tyrosine intermediate of the active site.

The protein belongs to the 'phage' integrase family.

This Bacillus subtilis (strain 168) protein is SPbeta prophage-derived recombinase-like protein YomM (yomM).